A 515-amino-acid chain; its full sequence is MTKRALISVSDKAGIVDFAQELKKLGWDIISTGGTKTALDTAGIKTIAIDDITGFPEMMDGRVKTLHPNIHGGLLARRDLDTHLKAAQENGIELIDLVVVNLYPFKETILRPDVTYAQAVENIDIGGPSMLRSAAKNHASVTVVVDPSDYERVLAELTEIGETTYETRQALAAKVFRHTAAYDALIAEYFTAQVGETKPEKLTLTYDLKQEMRYGENPQQAADFYQKALPTDYSIASAKQLNGKELSFNNIRDADAAIRIIRDFKERPTVVALKHMNPCGIGQADTIEKAWDYAYEADSVSIFGGIVVLNREVDKATAEKMHPIFLEIIIAPSYSDEALAILTNKKKNLRILQLPFEGQAASEIEAEYTGVVGGMLVQNQDVIEEKADAWEVVTERQPSDDEKEALEFAWRAIKYVKSNGILIANNHMTLGVGPGQTNRVASVRIAIEQAKDRLEGAALASDAFFPFADNIEEIAAAGIKAIIQPGGSVRDQESIDAANKHGIAMIFTGVRHFRH.

The MGS-like domain maps to 1-145; that stretch reads MTKRALISVS…KNHASVTVVV (145 aa).

It belongs to the PurH family.

The catalysed reaction is (6R)-10-formyltetrahydrofolate + 5-amino-1-(5-phospho-beta-D-ribosyl)imidazole-4-carboxamide = 5-formamido-1-(5-phospho-D-ribosyl)imidazole-4-carboxamide + (6S)-5,6,7,8-tetrahydrofolate. It catalyses the reaction IMP + H2O = 5-formamido-1-(5-phospho-D-ribosyl)imidazole-4-carboxamide. Its pathway is purine metabolism; IMP biosynthesis via de novo pathway; 5-formamido-1-(5-phospho-D-ribosyl)imidazole-4-carboxamide from 5-amino-1-(5-phospho-D-ribosyl)imidazole-4-carboxamide (10-formyl THF route): step 1/1. It participates in purine metabolism; IMP biosynthesis via de novo pathway; IMP from 5-formamido-1-(5-phospho-D-ribosyl)imidazole-4-carboxamide: step 1/1. In Streptococcus uberis (strain ATCC BAA-854 / 0140J), this protein is Bifunctional purine biosynthesis protein PurH.